Consider the following 80-residue polypeptide: MSCCGGNCGCGSGCKCVGCGGCKMYPDLSFSGETTTTETLVLGVAPAMNSQFEASGETFVAENDACKCGSDCKCNPCTCK.

The protein belongs to the metallothionein superfamily. Type 15 family.

In terms of biological role, metallothioneins have a high content of cysteine residues that bind various heavy metals. The polypeptide is Metallothionein-like protein type 2, MT2-4/MT2-25 (Brassica juncea (Indian mustard)).